A 216-amino-acid polypeptide reads, in one-letter code: uncharacterized protein (216 aa).

A compositionally biased stretch (polar residues) spans 182–193; that stretch reads STSNASVNSDDA. A disordered region spans residues 182–204; the sequence is STSNASVNSDDASTAELGPTSEE.

This is an uncharacterized protein from Caenorhabditis elegans.